The primary structure comprises 113 residues: Nucleoid-associated protein Synpcc7942_0464 (113 aa).

Belongs to the YbaB/EbfC family. In terms of assembly, homodimer.

The protein resides in the cytoplasm. The protein localises to the nucleoid. Its function is as follows. Binds to DNA and alters its conformation. May be involved in regulation of gene expression, nucleoid organization and DNA protection. The sequence is that of Nucleoid-associated protein Synpcc7942_0464 from Synechococcus elongatus (strain ATCC 33912 / PCC 7942 / FACHB-805) (Anacystis nidulans R2).